Reading from the N-terminus, the 157-residue chain is Ubiquitin-like protein 4A (157 aa).

The 76-residue stretch at 1-76 folds into the Ubiquitin-like domain; it reads MQLTVKALQG…LNLVVKPLEK (76 aa). A Glycyl lysine isopeptide (Lys-Gly) (interchain with G-Cter in ubiquitin) cross-link involves residue Lys-48. Ser-90 bears the Phosphoserine mark. Residues 96 to 138 form a required and sufficient for interaction with BAG6 region; it reads WQLISKVLARHFSAADASRVLEQLQRDYERSLSRLTLDDIERL.

Component of the BAG6/BAT3 complex, at least composed of BAG6, UBL4A and GET4/TRC35. Interacts with BAG6; the interaction is direct and required for UBL4A protein stability. Interacts with USP13; may be indirect via BAG6. Polyubiquitinated. Ubiquitination by AMFR and deubiquitination by USP13 may regulate the interaction between the BAG6/BAT complex and SGTA and therefore may regulate client proteins fate.

The protein localises to the cytoplasm. It is found in the cytosol. Its subcellular location is the nucleus. As part of a cytosolic protein quality control complex, the BAG6/BAT3 complex, maintains misfolded and hydrophobic patches-containing proteins in a soluble state and participates in their proper delivery to the endoplasmic reticulum or alternatively can promote their sorting to the proteasome where they undergo degradation. The BAG6/BAT3 complex is involved in the post-translational delivery of tail-anchored/type II transmembrane proteins to the endoplasmic reticulum membrane. Recruited to ribosomes, it interacts with the transmembrane region of newly synthesized tail-anchored proteins and together with SGTA and ASNA1 mediates their delivery to the endoplasmic reticulum. Client proteins that cannot be properly delivered to the endoplasmic reticulum are ubiquitinated and sorted to the proteasome. Similarly, the BAG6/BAT3 complex also functions as a sorting platform for proteins of the secretory pathway that are mislocalized to the cytosol either delivering them to the proteasome for degradation or to the endoplasmic reticulum. The BAG6/BAT3 complex also plays a role in the endoplasmic reticulum-associated degradation (ERAD), a quality control mechanism that eliminates unwanted proteins of the endoplasmic reticulum through their retrotranslocation to the cytosol and their targeting to the proteasome. It maintains these retrotranslocated proteins in an unfolded yet soluble state condition in the cytosol to ensure their proper delivery to the proteasome. This chain is Ubiquitin-like protein 4A (UBL4A), found in Callithrix jacchus (White-tufted-ear marmoset).